We begin with the raw amino-acid sequence, 297 residues long: 33 kDa chaperonin (297 aa).

2 disulfide bridges follow: Cys-232/Cys-234 and Cys-266/Cys-269.

It belongs to the HSP33 family. Post-translationally, under oxidizing conditions two disulfide bonds are formed involving the reactive cysteines. Under reducing conditions zinc is bound to the reactive cysteines and the protein is inactive.

The protein resides in the cytoplasm. In terms of biological role, redox regulated molecular chaperone. Protects both thermally unfolding and oxidatively damaged proteins from irreversible aggregation. Plays an important role in the bacterial defense system toward oxidative stress. The protein is 33 kDa chaperonin of Pseudomonas paraeruginosa (strain DSM 24068 / PA7) (Pseudomonas aeruginosa (strain PA7)).